The sequence spans 213 residues: Redox-sensing transcriptional repressor Rex (213 aa).

Positions 16–55 (VYSRFLERMDRNGIVTVSSGEIAEGVGVSSAQVRKDLAYF) form a DNA-binding region, H-T-H motif. Position 90–95 (90–95 (GAGNLG)) interacts with NAD(+).

The protein belongs to the transcriptional regulatory Rex family. In terms of assembly, homodimer.

It is found in the cytoplasm. Functionally, modulates transcription in response to changes in cellular NADH/NAD(+) redox state. This is Redox-sensing transcriptional repressor Rex from Pelotomaculum thermopropionicum (strain DSM 13744 / JCM 10971 / SI).